The chain runs to 756 residues: Lysyl oxidase homolog 4 (756 aa).

Positions 1 to 24 (MAWSPPATLFLFLLLLGQPPPSRP) are cleaved as a signal peptide. 4 SRCR domains span residues 32–133 (LRLV…VICH), 159–287 (VRLK…VSCV), 311–411 (VRLR…VRCN), and 421–529 (VRLA…VSCM). 17 disulfide bridges follow: C58–C122, C71–C132, C102–C112, C191–C276, C204–C286, C251–C261, C336–C400, C349–C410, C380–C390, C450–C515, C463–C528, C497–C507, C558–C564, C610–C658, C642–C648, C670–C680, and C717–C731. Residue N198 is glycosylated (N-linked (GlcNAc...) asparagine). Residues 533 to 736 (PDLVMNAQLV…WLHNCHTGNS (204 aa)) form a lysyl-oxidase like region. Residues H611, H613, and H615 each contribute to the Cu cation site. N629 carries an N-linked (GlcNAc...) asparagine glycan. The lysine tyrosylquinone (Lys-Tyr) cross-link spans 638–674 (KASFCLEDTNCPTGLQRRYACANFGEQGVTVGCWDTY). Y674 bears the 2',4',5'-topaquinone mark.

It belongs to the lysyl oxidase family. The cofactor is Cu cation. It depends on lysine tyrosylquinone residue as a cofactor. In terms of processing, the lysine tyrosylquinone cross-link (LTQ) is generated by condensation of the epsilon-amino group of a lysine with a topaquinone produced by oxidation of tyrosine. May be proteolytically cleaved by BMP1. As to expression, expressed in many tissues, the highest levels among the tissues studied being in the skeletal muscle, testis and pancreas. Expressed in cartilage.

It localises to the secreted. The protein localises to the extracellular space. It carries out the reaction L-lysyl-[protein] + O2 + H2O = (S)-2-amino-6-oxohexanoyl-[protein] + H2O2 + NH4(+). Inhibited by beta-aminopropionitrile (BAPN). Catalyzes the oxidative deamination of lysine and hydroxylysine residues in collagen and elastin, resulting in the formation of covalent cross-linkages, and the stabilization of collagen and elastin fibers. The sequence is that of Lysyl oxidase homolog 4 (LOXL4) from Homo sapiens (Human).